The following is a 356-amino-acid chain: Alpha-N-acetylneuraminide alpha-2,8-sialyltransferase (356 aa).

The Cytoplasmic segment spans residues 1-29 (MSPCGRARRQTSRGAMAVLAWKFPRTRLP). Residues 30–48 (MGASALCVVVLCWLYIFPV) form a helical; Signal-anchor for type II membrane protein membrane-spanning segment. The Lumenal portion of the chain corresponds to 49–356 (YRLPNEKEIV…CEDTSLQPTS (308 aa)). 2 N-linked (GlcNAc...) asparagine glycosylation sites follow: Asn-71 and Asn-119. Disulfide bonds link Cys-138/Cys-287 and Cys-152/Cys-347. Asn-143 and Asn-166 together coordinate CMP-N-acetyl-beta-neuraminate. 2 N-linked (GlcNAc...) asparagine glycosylation sites follow: Asn-214 and Asn-245. CMP-N-acetyl-beta-neuraminate is bound by residues Ser-274, Thr-275, Gly-276, Trp-296, and His-310. His-322 functions as the Proton donor/acceptor in the catalytic mechanism.

This sequence belongs to the glycosyltransferase 29 family.

The protein localises to the golgi apparatus membrane. The enzyme catalyses an N-acetyl-alpha-neuraminyl-(2-&gt;3)-beta-D-galactosyl derivative + CMP-N-acetyl-beta-neuraminate = an N-acetyl-alpha-neuraminyl-(2-&gt;8)-N-acetyl-alpha-neuraminyl-(2-&gt;3)-beta-D-galactosyl derivative + CMP + H(+). It catalyses the reaction a ganglioside GM3 (d18:1(4E)) + CMP-N-acetyl-beta-neuraminate = a ganglioside GD3 (d18:1(4E)) + CMP + H(+). It carries out the reaction a ganglioside GD3 (d18:1(4E)) + CMP-N-acetyl-beta-neuraminate = a ganglioside GT3 (d18:1(4E)) + CMP + H(+). The catalysed reaction is a ganglioside GD1a (d18:1(4E)) + CMP-N-acetyl-beta-neuraminate = a ganglioside GT1a (d18:1(4E)) + CMP + H(+). The enzyme catalyses a ganglioside GT1b (d18:1(4E)) + CMP-N-acetyl-beta-neuraminate = a ganglioside GQ1b (d18:1(4E)) + CMP + H(+). It catalyses the reaction a ganglioside GM1b (d18:1(4E)) + CMP-N-acetyl-beta-neuraminate = a ganglioside GD1c (d18:1(4E)) + CMP + H(+). It carries out the reaction a ganglioside GD3 + CMP-N-acetyl-beta-neuraminate = a ganglioside GT3 + CMP + H(+). The catalysed reaction is [alpha-N-acetylneuraminyl-(2-&gt;8)](n)-alpha-N-acetylneuraminyl-(2-&gt;8)-alpha-N-acetylneuraminyl-(2-&gt;3)-beta-D-galactosyl-(1-&gt;4)-beta-D-glucosyl-(1&lt;-&gt;1)-ceramide + CMP-N-acetyl-beta-neuraminate = [alpha-N-acetylneuraminyl-(2-&gt;8)](n+1)-alpha-N-acetylneuraminyl-(2-&gt;8)-alpha-N-acetylneuraminyl-(2-&gt;3)-beta-D-galactosyl-(1-&gt;4)-beta-D-glucosyl-(1&lt;-&gt;1)-ceramide + CMP + H(+). It participates in protein modification; protein glycosylation. Its pathway is lipid metabolism; sphingolipid metabolism. Its function is as follows. Catalyzes the addition of sialic acid in alpha 2,8-linkage to the sialic acid moiety of the ganglioside GM3 to form ganglioside GD3; gangliosides are a subfamily of complex glycosphingolipds that contain one or more residues of sialic acid. Can catalyze the addition of a second alpha-2,8- sialic acid to GD3 to form GT3. Can use GM1b, GD1a and GT1b as acceptor substrates to synthesize GD1c, GT1a and GQ1b respectively. This chain is Alpha-N-acetylneuraminide alpha-2,8-sialyltransferase, found in Pan troglodytes (Chimpanzee).